The chain runs to 81 residues: ATP synthase subunit c, chloroplastic (81 aa).

2 helical membrane-spanning segments follow: residues 3-23 (PIIS…ASIG) and 57-77 (LAFM…LLFA).

The protein belongs to the ATPase C chain family. In terms of assembly, F-type ATPases have 2 components, F(1) - the catalytic core - and F(0) - the membrane proton channel. F(1) has five subunits: alpha(3), beta(3), gamma(1), delta(1), epsilon(1). F(0) has four main subunits: a(1), b(1), b'(1) and c(10-14). The alpha and beta chains form an alternating ring which encloses part of the gamma chain. F(1) is attached to F(0) by a central stalk formed by the gamma and epsilon chains, while a peripheral stalk is formed by the delta, b and b' chains.

The protein resides in the plastid. Its subcellular location is the chloroplast thylakoid membrane. Its function is as follows. F(1)F(0) ATP synthase produces ATP from ADP in the presence of a proton or sodium gradient. F-type ATPases consist of two structural domains, F(1) containing the extramembraneous catalytic core and F(0) containing the membrane proton channel, linked together by a central stalk and a peripheral stalk. During catalysis, ATP synthesis in the catalytic domain of F(1) is coupled via a rotary mechanism of the central stalk subunits to proton translocation. Functionally, key component of the F(0) channel; it plays a direct role in translocation across the membrane. A homomeric c-ring of between 10-14 subunits forms the central stalk rotor element with the F(1) delta and epsilon subunits. The chain is ATP synthase subunit c, chloroplastic from Phaseolus vulgaris (Kidney bean).